Here is a 316-residue protein sequence, read N- to C-terminus: Biotin synthase (316 aa).

A Radical SAM core domain is found at Asn-36–Ala-260. 3 residues coordinate [4Fe-4S] cluster: Cys-51, Cys-55, and Cys-58. 4 residues coordinate [2Fe-2S] cluster: Cys-95, Cys-126, Cys-186, and Arg-258.

It belongs to the radical SAM superfamily. Biotin synthase family. Homodimer. The cofactor is [4Fe-4S] cluster. Requires [2Fe-2S] cluster as cofactor.

It catalyses the reaction (4R,5S)-dethiobiotin + (sulfur carrier)-SH + 2 reduced [2Fe-2S]-[ferredoxin] + 2 S-adenosyl-L-methionine = (sulfur carrier)-H + biotin + 2 5'-deoxyadenosine + 2 L-methionine + 2 oxidized [2Fe-2S]-[ferredoxin]. The protein operates within cofactor biosynthesis; biotin biosynthesis; biotin from 7,8-diaminononanoate: step 2/2. Catalyzes the conversion of dethiobiotin (DTB) to biotin by the insertion of a sulfur atom into dethiobiotin via a radical-based mechanism. This chain is Biotin synthase, found in Lawsonia intracellularis (strain PHE/MN1-00).